The chain runs to 376 residues: Phytanoyl-CoA hydroxylase-interacting protein-like (376 aa).

The Fibronectin type-III domain maps to 52–161; it reads VPHNIKISNI…EIIEFCTADY (110 aa).

It belongs to the PHYHIP family.

In terms of biological role, may play a role in the development of the central system. This is Phytanoyl-CoA hydroxylase-interacting protein-like (phyhipl) from Xenopus laevis (African clawed frog).